The sequence spans 524 residues: Peptide chain release factor 3 (524 aa).

Residues 8 to 276 (NKRRTFAIIS…GFAKYAPAPE (269 aa)) enclose the tr-type G domain. GTP contacts are provided by residues 17–24 (SHPDAGKT), 85–89 (DTPGH), and 139–142 (NKLD).

The protein belongs to the TRAFAC class translation factor GTPase superfamily. Classic translation factor GTPase family. PrfC subfamily.

Its subcellular location is the cytoplasm. Functionally, increases the formation of ribosomal termination complexes and stimulates activities of RF-1 and RF-2. It binds guanine nucleotides and has strong preference for UGA stop codons. It may interact directly with the ribosome. The stimulation of RF-1 and RF-2 is significantly reduced by GTP and GDP, but not by GMP. The protein is Peptide chain release factor 3 of Hydrogenovibrio crunogenus (strain DSM 25203 / XCL-2) (Thiomicrospira crunogena).